A 47-amino-acid polypeptide reads, in one-letter code: Large ribosomal subunit protein bL34 (47 aa).

Belongs to the bacterial ribosomal protein bL34 family.

This chain is Large ribosomal subunit protein bL34, found in Corynebacterium glutamicum (strain R).